A 402-amino-acid polypeptide reads, in one-letter code: Argininosuccinate synthase (402 aa).

Residues 10 to 18 (AYSGGLDTS) and Ala37 each bind ATP. Positions 88 and 93 each coordinate L-citrulline. Gly118 lines the ATP pocket. Thr120, Asn124, and Asp125 together coordinate L-aspartate. Asn124 contributes to the L-citrulline binding site. L-citrulline-binding residues include Arg128, Ser179, Ser188, Glu264, and Tyr276.

Belongs to the argininosuccinate synthase family. Type 1 subfamily. Homotetramer.

It localises to the cytoplasm. The enzyme catalyses L-citrulline + L-aspartate + ATP = 2-(N(omega)-L-arginino)succinate + AMP + diphosphate + H(+). It functions in the pathway amino-acid biosynthesis; L-arginine biosynthesis; L-arginine from L-ornithine and carbamoyl phosphate: step 2/3. This Alkalilimnicola ehrlichii (strain ATCC BAA-1101 / DSM 17681 / MLHE-1) protein is Argininosuccinate synthase.